A 163-amino-acid polypeptide reads, in one-letter code: Epithelial membrane protein 3 (163 aa).

A helical transmembrane segment spans residues 4–24; it reads LLLVVSALHILILILLFVATL. N-linked (GlcNAc...) asparagine glycans are attached at residues asparagine 49 and asparagine 56. 3 helical membrane passes run 66-86, 100-120, and 139-159; these read VQVL…LFMF, TGFC…IYAI, and FALA…YIHL.

This sequence belongs to the PMP-22/EMP/MP20 family.

The protein resides in the membrane. Its function is as follows. Probably involved in cell proliferation and cell-cell interactions. The sequence is that of Epithelial membrane protein 3 (EMP3) from Bos taurus (Bovine).